A 540-amino-acid polypeptide reads, in one-letter code: UDP-N-acetylmuramyl-tripeptide synthetase (540 aa).

Ser-33 is a binding site for UDP-N-acetyl-alpha-D-muramoyl-L-alanyl-D-glutamate. Residue 114 to 120 (GTEGKSS) participates in ATP binding. Residues 158-159 (TT), Ser-185, and Arg-195 contribute to the UDP-N-acetyl-alpha-D-muramoyl-L-alanyl-D-glutamate site. Lys-227 bears the N6-carboxylysine mark.

It belongs to the MurCDEF family. MurE subfamily. Carboxylation is probably crucial for Mg(2+) binding and, consequently, for the gamma-phosphate positioning of ATP.

It is found in the cytoplasm. The protein operates within cell wall biogenesis; peptidoglycan biosynthesis. Its function is as follows. Catalyzes the addition of an amino acid to the nucleotide precursor UDP-N-acetylmuramoyl-L-alanyl-D-glutamate (UMAG) in the biosynthesis of bacterial cell-wall peptidoglycan. The chain is UDP-N-acetylmuramyl-tripeptide synthetase from Treponema pallidum (strain Nichols).